We begin with the raw amino-acid sequence, 469 residues long: Glutamate--tRNA ligase (469 aa).

Residues 9-19 carry the 'HIGH' region motif; it reads PSPTGFLHVGG. The Zn(2+) site is built by C98, C100, C125, and D127. A 'KMSKS' region motif is present at residues 236–240; it reads KLSKR. An ATP-binding site is contributed by K239.

This sequence belongs to the class-I aminoacyl-tRNA synthetase family. Glutamate--tRNA ligase type 1 subfamily. In terms of assembly, monomer. Requires Zn(2+) as cofactor.

The protein localises to the cytoplasm. The enzyme catalyses tRNA(Glu) + L-glutamate + ATP = L-glutamyl-tRNA(Glu) + AMP + diphosphate. Its function is as follows. Catalyzes the attachment of glutamate to tRNA(Glu) in a two-step reaction: glutamate is first activated by ATP to form Glu-AMP and then transferred to the acceptor end of tRNA(Glu). This is Glutamate--tRNA ligase from Shewanella loihica (strain ATCC BAA-1088 / PV-4).